Here is an 864-residue protein sequence, read N- to C-terminus: Leucine--tRNA ligase (864 aa).

The 'HIGH' region signature appears at 42 to 52; it reads PYPSGRLHMGH. Residues 621 to 625 carry the 'KMSKS' region motif; that stretch reads KMSKS. K624 provides a ligand contact to ATP.

The protein belongs to the class-I aminoacyl-tRNA synthetase family.

The protein localises to the cytoplasm. It carries out the reaction tRNA(Leu) + L-leucine + ATP = L-leucyl-tRNA(Leu) + AMP + diphosphate. In Alkalilimnicola ehrlichii (strain ATCC BAA-1101 / DSM 17681 / MLHE-1), this protein is Leucine--tRNA ligase.